Here is a 202-residue protein sequence, read N- to C-terminus: Large ribosomal subunit protein uL13 (202 aa).

It belongs to the universal ribosomal protein uL13 family. As to quaternary structure, component of the large ribosomal subunit (LSU). Mature N.crassa ribosomes consist of a small (40S) and a large (60S) subunit. The 40S small subunit contains 1 molecule of ribosomal RNA (18S rRNA) and at least 32 different proteins. The large 60S subunit contains 3 rRNA molecules (26S, 5.8S and 5S rRNA) and at least 42 different proteins.

Its subcellular location is the cytoplasm. Its function is as follows. Component of the ribosome, a large ribonucleoprotein complex responsible for the synthesis of proteins in the cell. The small ribosomal subunit (SSU) binds messenger RNAs (mRNAs) and translates the encoded message by selecting cognate aminoacyl-transfer RNA (tRNA) molecules. The large subunit (LSU) contains the ribosomal catalytic site termed the peptidyl transferase center (PTC), which catalyzes the formation of peptide bonds, thereby polymerizing the amino acids delivered by tRNAs into a polypeptide chain. The nascent polypeptides leave the ribosome through a tunnel in the LSU and interact with protein factors that function in enzymatic processing, targeting, and the membrane insertion of nascent chains at the exit of the ribosomal tunnel. The polypeptide is Large ribosomal subunit protein uL13 (crp-46) (Neurospora crassa (strain ATCC 24698 / 74-OR23-1A / CBS 708.71 / DSM 1257 / FGSC 987)).